We begin with the raw amino-acid sequence, 500 residues long: Cytochrome P450 81F1 (500 aa).

A helical membrane pass occupies residues 1–21; the sequence is MLYFILLPLLFLVISYKFLYS. Lysine 248 is covalently cross-linked (Glycyl lysine isopeptide (Lys-Gly) (interchain with G-Cter in ubiquitin)). Cysteine 438 lines the heme pocket.

Belongs to the cytochrome P450 family. The cofactor is heme.

It localises to the membrane. It functions in the pathway secondary metabolite biosynthesis. Functionally, involved in indole glucosinolate biosynthesis. Catalyzes hydroxylation reactions of the glucosinolate indole ring. Converts indol-3-yl-methylglucosinolate (I3M) to 4-hydroxy-indol-3-yl-methylglucosinolate (4OH-I3M) and/or 1-hydroxy-indol-3-yl-methylglucosinolate (1OH-I3M) intermediates. These hydroxy intermediates are converted to 4-methoxy-indol-3-yl-methylglucosinolate (4MO-I3M) and 1-methoxy-indol-3-yl-methylglucosinolate (1MO-I3M) by indole glucosinolate methyltransferase 1 and 2 (IGMT1 and IGMT2). The chain is Cytochrome P450 81F1 from Arabidopsis thaliana (Mouse-ear cress).